Consider the following 654-residue polypeptide: Macrolide export ATP-binding/permease protein MacB (654 aa).

One can recognise an ABC transporter domain in the interval 6 to 244; it reads LKVEDLTRRF…EQAAKTPSAS (239 aa). 42 to 49 contributes to the ATP binding site; sequence GASGSGKS. 4 helical membrane passes run 280–300, 529–549, 584–604, and 619–639; these read FLTMLGIIIGIASVVSVVALG, LLISAIAVISLIVGGIGVMNI, LVCLCGGIAGIGLAFLIGFAF, and SIIWAFICSTLIGIAFGFLPA.

Belongs to the ABC transporter superfamily. Macrolide exporter (TC 3.A.1.122) family. Homodimer. Part of the tripartite efflux system MacAB-TolC, which is composed of an inner membrane transporter, MacB, a periplasmic membrane fusion protein, MacA, and an outer membrane component, TolC. The complex forms a large protein conduit and can translocate molecules across both the inner and outer membranes. Interacts with MacA.

Its subcellular location is the cell inner membrane. Functionally, part of the tripartite efflux system MacAB-TolC. MacB is a non-canonical ABC transporter that contains transmembrane domains (TMD), which form a pore in the inner membrane, and an ATP-binding domain (NBD), which is responsible for energy generation. Confers resistance against macrolides. The chain is Macrolide export ATP-binding/permease protein MacB from Vibrio parahaemolyticus serotype O3:K6 (strain RIMD 2210633).